The following is a 322-amino-acid chain: Lymphokine-activated killer T-cell-originated protein kinase (322 aa).

N-acetylmethionine is present on M1. Residues T9 and T24 each carry the phosphothreonine modification. A Phosphoserine modification is found at S32. The 291-residue stretch at 32–322 (SPFMQKLGFG…HIVEALETDV (291 aa)) folds into the Protein kinase domain. 38 to 46 (LGFGTGVNV) contacts ATP. S59 carries the phosphoserine modification. Position 64 (K64) interacts with ATP. D167 functions as the Proton acceptor in the catalytic mechanism. K169 participates in a covalent cross-link: Glycyl lysine isopeptide (Lys-Gly) (interchain with G-Cter in SUMO2). The segment at 320–322 (TDV) is PDZ-interaction.

This sequence belongs to the protein kinase superfamily. STE Ser/Thr protein kinase family. MAP kinase kinase subfamily. As to quaternary structure, interacts with DLG1 and TP53. In terms of processing, phosphorylated; in a cell-cycle dependent manner at mitosis. As to expression, expressed in the testis and placenta. In the testis, restrictedly expressed in outer cell layer of seminiferous tubules.

It carries out the reaction L-seryl-[protein] + ATP = O-phospho-L-seryl-[protein] + ADP + H(+). It catalyses the reaction L-threonyl-[protein] + ATP = O-phospho-L-threonyl-[protein] + ADP + H(+). The enzyme catalyses L-tyrosyl-[protein] + ATP = O-phospho-L-tyrosyl-[protein] + ADP + H(+). Its activity is regulated as follows. Activated by phosphorylation. Its function is as follows. Phosphorylates MAP kinase p38. Seems to be active only in mitosis. May also play a role in the activation of lymphoid cells. When phosphorylated, forms a complex with TP53, leading to TP53 destabilization and attenuation of G2/M checkpoint during doxorubicin-induced DNA damage. The polypeptide is Lymphokine-activated killer T-cell-originated protein kinase (PBK) (Homo sapiens (Human)).